Consider the following 222-residue polypeptide: Protein CicA (222 aa).

This Caulobacter vibrioides (strain ATCC 19089 / CIP 103742 / CB 15) (Caulobacter crescentus) protein is Protein CicA (cicA).